A 212-amino-acid polypeptide reads, in one-letter code: Peptide methionine sulfoxide reductase MsrA (212 aa).

C52 is an active-site residue.

This sequence belongs to the MsrA Met sulfoxide reductase family.

It carries out the reaction L-methionyl-[protein] + [thioredoxin]-disulfide + H2O = L-methionyl-(S)-S-oxide-[protein] + [thioredoxin]-dithiol. The enzyme catalyses [thioredoxin]-disulfide + L-methionine + H2O = L-methionine (S)-S-oxide + [thioredoxin]-dithiol. Has an important function as a repair enzyme for proteins that have been inactivated by oxidation. Catalyzes the reversible oxidation-reduction of methionine sulfoxide in proteins to methionine. This Salmonella paratyphi A (strain AKU_12601) protein is Peptide methionine sulfoxide reductase MsrA.